The chain runs to 218 residues: Ribose-5-phosphate isomerase A (218 aa).

Substrate contacts are provided by residues 28–31 (TGST), 81–84 (DGAD), and 94–97 (KGGG). The active-site Proton acceptor is Glu-103. A substrate-binding site is contributed by Lys-121.

Belongs to the ribose 5-phosphate isomerase family. Homodimer.

It carries out the reaction aldehydo-D-ribose 5-phosphate = D-ribulose 5-phosphate. The protein operates within carbohydrate degradation; pentose phosphate pathway; D-ribose 5-phosphate from D-ribulose 5-phosphate (non-oxidative stage): step 1/1. Catalyzes the reversible conversion of ribose-5-phosphate to ribulose 5-phosphate. The sequence is that of Ribose-5-phosphate isomerase A from Thioalkalivibrio sulfidiphilus (strain HL-EbGR7).